The chain runs to 198 residues: HTH-type transcriptional regulator BetI (198 aa).

Residues 8–68 (PIRRQQLIDA…ATMRYLISHL (61 aa)) enclose the HTH tetR-type domain. Residues 31 to 50 (TIAQIARRAGVSNGIISHYF) constitute a DNA-binding region (H-T-H motif).

It functions in the pathway amine and polyamine biosynthesis; betaine biosynthesis via choline pathway [regulation]. In terms of biological role, repressor involved in the biosynthesis of the osmoprotectant glycine betaine. It represses transcription of the choline transporter BetT and the genes of BetAB involved in the synthesis of glycine betaine. This chain is HTH-type transcriptional regulator BetI, found in Serratia proteamaculans (strain 568).